We begin with the raw amino-acid sequence, 67 residues long: MIVPIRCWTCGRPLGHLWEPFRNRVLAGEDPGKVLDDLHVTRYCCRRTLLAHVELINQVLPYGLIEK.

C7, C10, C44, and C45 together coordinate Zn(2+).

This sequence belongs to the archaeal Rpo10/eukaryotic RPB10 RNA polymerase subunit family. As to quaternary structure, part of the RNA polymerase complex. Zn(2+) is required as a cofactor.

Its subcellular location is the cytoplasm. The catalysed reaction is RNA(n) + a ribonucleoside 5'-triphosphate = RNA(n+1) + diphosphate. Functionally, DNA-dependent RNA polymerase (RNAP) catalyzes the transcription of DNA into RNA using the four ribonucleoside triphosphates as substrates. The polypeptide is DNA-directed RNA polymerase subunit Rpo10 (Caldivirga maquilingensis (strain ATCC 700844 / DSM 13496 / JCM 10307 / IC-167)).